Reading from the N-terminus, the 342-residue chain is Flotillin-like protein FloA (342 aa).

The next 2 membrane-spanning stretches (helical) occupy residues 18 to 38 and 39 to 59; these read FFIF…GKFI and SLWF…IIGM.

Belongs to the flotillin-like FloA family. Homooligomerizes.

The protein localises to the cell membrane. It localises to the membrane raft. Functionally, found in functional membrane microdomains (FMM) that may be equivalent to eukaryotic membrane rafts. FMMs are highly dynamic and increase in number as cells age. Flotillins are thought to be important factors in membrane fluidity. The chain is Flotillin-like protein FloA from Protochlamydia amoebophila (strain UWE25).